The chain runs to 481 residues: GDP-fucose protein O-fucosyltransferase 3 (481 aa).

Topologically, residues 1 to 8 (MVRFQRRK) are cytoplasmic. Residues 9–31 (LLASCLCVTATVFLMVTLQVVVE) traverse the membrane as a helical; Signal-anchor for type II membrane protein segment. The Lumenal segment spans residues 32-481 (LGKFERKKLK…EEFWALVFKD (450 aa)). Residues Asn-110, Asn-168, and Asn-318 are each glycosylated (N-linked (GlcNAc...) asparagine). A disulfide bridge links Cys-389 with Cys-392. An N-linked (GlcNAc...) asparagine glycan is attached at Asn-468.

Belongs to the glycosyltransferase 10 family. In terms of tissue distribution, widely expressed, with a higher expression in liver and thymus.

The protein resides in the endoplasmic reticulum membrane. It carries out the reaction L-threonyl-[protein] + GDP-beta-L-fucose = 3-O-(alpha-L-fucosyl)-L-threonyl-[protein] + GDP + H(+). The enzyme catalyses L-seryl-[protein] + GDP-beta-L-fucose = 3-O-(alpha-L-fucosyl)-L-seryl-[protein] + GDP + H(+). It functions in the pathway protein modification; protein glycosylation. Its function is as follows. Protein O-fucosyltransferase that specifically catalyzes O-fucosylation of serine or threonine residues in EMI domains of target proteins, such as MMRN1, MMRN2 and EMID1. Attaches fucose through an O-glycosidic linkage. O-fucosylation of EMI domain-containing proteins may be required for facilitating protein folding and secretion. May also show alpha-(1,3)-fucosyltransferase activity toward the innermost N-acetyl glucosamine (GlcNAc) residue in biantennary N-glycan acceptors. However, this was tested with a library of synthetic substrates and this activity is unsure in vivo. May be involved in biosynthesis of Lewis X-carrying biantennary N-glycans that regulate neuron stem cell self-renewal during brain development. The chain is GDP-fucose protein O-fucosyltransferase 3 from Mus musculus (Mouse).